The primary structure comprises 156 residues: D-aminoacyl-tRNA deacylase (156 aa).

The short motif at 139–140 is the Gly-cisPro motif, important for rejection of L-amino acids element; the sequence is GP.

The protein belongs to the DTD family. Homodimer.

The protein resides in the cytoplasm. The catalysed reaction is glycyl-tRNA(Ala) + H2O = tRNA(Ala) + glycine + H(+). It catalyses the reaction a D-aminoacyl-tRNA + H2O = a tRNA + a D-alpha-amino acid + H(+). An aminoacyl-tRNA editing enzyme that deacylates mischarged D-aminoacyl-tRNAs. Also deacylates mischarged glycyl-tRNA(Ala), protecting cells against glycine mischarging by AlaRS. Acts via tRNA-based rather than protein-based catalysis; rejects L-amino acids rather than detecting D-amino acids in the active site. By recycling D-aminoacyl-tRNA to D-amino acids and free tRNA molecules, this enzyme counteracts the toxicity associated with the formation of D-aminoacyl-tRNA entities in vivo and helps enforce protein L-homochirality. This chain is D-aminoacyl-tRNA deacylase, found in Marinobacter nauticus (strain ATCC 700491 / DSM 11845 / VT8) (Marinobacter aquaeolei).